Reading from the N-terminus, the 156-residue chain is Snaclec A14 (156 aa).

The signal sequence occupies residues 1-23 (MGRFIFVRVGLLVVFLSLSGTGA). 3 disulfide bridges follow: Cys-27-Cys-38, Cys-55-Cys-152, and Cys-127-Cys-144. The C-type lectin domain maps to 34–153 (YDQHCYKAFD…CGDDYPFVCK (120 aa)). The N-linked (GlcNAc...) asparagine glycan is linked to Asn-141.

This sequence belongs to the snaclec family. In terms of assembly, heterodimer; disulfide-linked. Expressed by the venom gland.

It localises to the secreted. Its function is as follows. Interferes with one step of hemostasis (modulation of platelet aggregation, or coagulation cascade, for example). The chain is Snaclec A14 from Macrovipera lebetinus (Levantine viper).